Consider the following 305-residue polypeptide: Sulfate adenylyltransferase subunit 2 (305 aa).

Belongs to the PAPS reductase family. CysD subfamily. In terms of assembly, heterodimer composed of CysD, the smaller subunit, and CysN.

It carries out the reaction sulfate + ATP + H(+) = adenosine 5'-phosphosulfate + diphosphate. Its pathway is sulfur metabolism; hydrogen sulfide biosynthesis; sulfite from sulfate: step 1/3. Its function is as follows. With CysN forms the ATP sulfurylase (ATPS) that catalyzes the adenylation of sulfate producing adenosine 5'-phosphosulfate (APS) and diphosphate, the first enzymatic step in sulfur assimilation pathway. APS synthesis involves the formation of a high-energy phosphoric-sulfuric acid anhydride bond driven by GTP hydrolysis by CysN coupled to ATP hydrolysis by CysD. The sequence is that of Sulfate adenylyltransferase subunit 2 from Azotobacter vinelandii (strain DJ / ATCC BAA-1303).